The sequence spans 311 residues: Meteorin-like protein (311 aa).

A signal peptide spans 1 to 45 (MRGAVWAARRRAGQQWPRSPGPGPGPPPPPPLLLLLLLLLGGASA). C52 and C75 form a disulfide bridge. N103 carries N-linked (GlcNAc...) asparagine glycosylation. Disulfide bonds link C107-C143, C188-C260, C191-C284, and C201-C306.

This sequence belongs to the meteorin family. In terms of processing, N-glycosylated. Highly expressed in subcutaneous adipose tissue.

The protein resides in the secreted. In terms of biological role, hormone induced following exercise or cold exposure that promotes energy expenditure. Induced either in the skeletal muscle after exercise or in adipose tissue following cold exposure and is present in the circulation. Able to stimulate energy expenditure associated with the browning of the white fat depots and improves glucose tolerance. Does not promote an increase in a thermogenic gene program via direct action on adipocytes, but acts by stimulating several immune cell subtypes to enter the adipose tissue and activate their prothermogenic actions. Stimulates an eosinophil-dependent increase in IL4 expression and promotes alternative activation of adipose tissue macrophages, which are required for the increased expression of the thermogenic and anti-inflammatory gene programs in fat. Required for some cold-induced thermogenic responses, suggesting a role in metabolic adaptations to cold temperatures. The protein is Meteorin-like protein (Metrnl) of Mus musculus (Mouse).